We begin with the raw amino-acid sequence, 265 residues long: Mlc titration factor A (265 aa).

Residues H111, H148, H152, and E211 each contribute to the Zn(2+) site.

This sequence belongs to the MtfA family. As to quaternary structure, interacts with Mlc. Requires Zn(2+) as cofactor.

The protein localises to the cytoplasm. Involved in the modulation of the activity of the glucose-phosphotransferase system (glucose-PTS). Interacts with the transcriptional repressor Mlc, preventing its interaction with DNA and leading to the modulation of expression of genes regulated by Mlc, including ptsG, which encodes the PTS system glucose-specific EIICB component. In terms of biological role, shows zinc-dependent metallopeptidase activity. The polypeptide is Mlc titration factor A (Salmonella gallinarum (strain 287/91 / NCTC 13346)).